A 151-amino-acid polypeptide reads, in one-letter code: MSGVAGREATLLAFDYGEKRIGVAVGNSLTRSARPLVVLQNRNREYRFEAVGKLIDEWKPDALVVGLPMHPDGTPHERTQLAKRFGNQLNGRFNLPVTWIDERYSSVEAEAGIRSGTRQAGMLDAEAACIILQQYLDGLSLEGPSDDHEFR.

It belongs to the YqgF nuclease family.

Its subcellular location is the cytoplasm. In terms of biological role, could be a nuclease involved in processing of the 5'-end of pre-16S rRNA. The chain is Putative pre-16S rRNA nuclease from Paraburkholderia phymatum (strain DSM 17167 / CIP 108236 / LMG 21445 / STM815) (Burkholderia phymatum).